The primary structure comprises 290 residues: Thymidylate synthase (290 aa).

Arg31 provides a ligand contact to dUMP. (6R)-5,10-methylene-5,6,7,8-tetrahydrofolate is bound at residue His61. 152-153 is a dUMP binding site; it reads RR. Catalysis depends on Cys172, which acts as the Nucleophile. DUMP contacts are provided by residues 192-195, Asn203, and 233-235; these read RSAD and HIY. (6R)-5,10-methylene-5,6,7,8-tetrahydrofolate is bound at residue Asp195. Residue Ala289 participates in (6R)-5,10-methylene-5,6,7,8-tetrahydrofolate binding.

Belongs to the thymidylate synthase family. Bacterial-type ThyA subfamily. In terms of assembly, homodimer.

The protein resides in the cytoplasm. The catalysed reaction is dUMP + (6R)-5,10-methylene-5,6,7,8-tetrahydrofolate = 7,8-dihydrofolate + dTMP. It participates in pyrimidine metabolism; dTTP biosynthesis. In terms of biological role, catalyzes the reductive methylation of 2'-deoxyuridine-5'-monophosphate (dUMP) to 2'-deoxythymidine-5'-monophosphate (dTMP) while utilizing 5,10-methylenetetrahydrofolate (mTHF) as the methyl donor and reductant in the reaction, yielding dihydrofolate (DHF) as a by-product. This enzymatic reaction provides an intracellular de novo source of dTMP, an essential precursor for DNA biosynthesis. The polypeptide is Thymidylate synthase (Psychrobacter cryohalolentis (strain ATCC BAA-1226 / DSM 17306 / VKM B-2378 / K5)).